A 178-amino-acid polypeptide reads, in one-letter code: ATP synthase subunit delta (178 aa).

Belongs to the ATPase delta chain family. In terms of assembly, F-type ATPases have 2 components, F(1) - the catalytic core - and F(0) - the membrane proton channel. F(1) has five subunits: alpha(3), beta(3), gamma(1), delta(1), epsilon(1). F(0) has three main subunits: a(1), b(2) and c(10-14). The alpha and beta chains form an alternating ring which encloses part of the gamma chain. F(1) is attached to F(0) by a central stalk formed by the gamma and epsilon chains, while a peripheral stalk is formed by the delta and b chains.

Its subcellular location is the cell inner membrane. In terms of biological role, f(1)F(0) ATP synthase produces ATP from ADP in the presence of a proton or sodium gradient. F-type ATPases consist of two structural domains, F(1) containing the extramembraneous catalytic core and F(0) containing the membrane proton channel, linked together by a central stalk and a peripheral stalk. During catalysis, ATP synthesis in the catalytic domain of F(1) is coupled via a rotary mechanism of the central stalk subunits to proton translocation. Functionally, this protein is part of the stalk that links CF(0) to CF(1). It either transmits conformational changes from CF(0) to CF(1) or is implicated in proton conduction. The chain is ATP synthase subunit delta from Pseudomonas syringae pv. syringae (strain B728a).